The primary structure comprises 513 residues: MASNDYTQQATQSYGAYPTQPGQGYSQQSNQPYGQQSYGGYGQSTDTSGYGQSSYSGSYGQTQNTGYSTQSAPQGYSSAGGYGSSQSSQSSYGQQSSYPGYGQQPAPSGTSGSYGSSSQSSGYGQPQGGGYGQQSGYGGQQQSYGQQQSYNPPQGYGQQSQYNSSGGGGGGGGGSYGQDQPSMSSGGGGGGYGNQDQSGGYGGGQQDRGGRGRGGGGGYNRSSGGYEPRGRGGGRGGRGGMGGSDRGGFNKFGGPRDQGSRHDSEQDNSDNNTIFVQGLGENVTIESVADYFKQIGIIKTNKKTGQPMINLYTDRETGKLKGEATVSFDDPPSAKAAIDWFDGKEFSGNPIKVSFATRRADFNRGGGNGRGGRGRGGPMGRGGYGGGGSGGGGRGGFPSGGGGGGGQQRAGDWKCPNPTCENMNFSWRNECNQCKAPKPDGPGGGPGGSHMGGNYGDDRRGGRGGYDRGGYRGRGGDRGGFRGGRGGGDRGGFGPGKMDSRGEHRQDRRERPY.

Residues 1-14 show a composition bias toward polar residues; sequence MASNDYTQQATQSY. Residues 1–273 are disordered; sequence MASNDYTQQA…SEQDNSDNNT (273 aa). 3 stretches are compositionally biased toward low complexity: residues 20–36, 43–63, and 84–124; these read QPGQGYSQQSNQPYGQQ, QSTDTSGYGQSSYSGSYGQTQ, and SSQS…SGYG. The span at 125–139 shows a compositional bias: gly residues; the sequence is QPQGGGYGQQSGYGG. The span at 140 to 164 shows a compositional bias: low complexity; it reads QQQSYGQQQSYNPPQGYGQQSQYNS. 2 stretches are compositionally biased toward gly residues: residues 165–176 and 185–219; these read SGGGGGGGGGSY and SGGGGGGYGNQDQSGGYGGGQQDRGGRGRGGGGGY. Asymmetric dimethylarginine; alternate occurs at positions 211 and 213. Omega-N-methylarginine; alternate occurs at positions 211 and 213. Asymmetric dimethylarginine occurs at positions 229, 231, 235, 238, and 246. Residues 231-246 show a composition bias toward gly residues; sequence RGGGRGGRGGMGGSDR. Phosphoserine is present on serine 264. The 87-residue stretch at 272 to 358 folds into the RRM domain; the sequence is NTIFVQGLGE…NPIKVSFATR (87 aa). Threonine 273 carries the post-translational modification Phosphothreonine. Lysine 321 is covalently cross-linked (Glycyl lysine isopeptide (Lys-Gly) (interchain with G-Cter in SUMO2)). Position 327 is a phosphoserine (serine 327). 2 disordered regions span residues 362–411 and 431–513; these read FNRG…QRAG and CNQC…ERPY. Arginine 364, arginine 370, arginine 373, arginine 375, and arginine 381 each carry asymmetric dimethylarginine. The segment covering 364–408 has biased composition (gly residues); sequence RGGGNGRGGRGRGGPMGRGGYGGGGSGGGGRGGFPSGGGGGGGQQ. The residue at position 394 (arginine 394) is an Asymmetric dimethylarginine; alternate. Arginine 394 is subject to Omega-N-methylarginine; alternate. The RanBP2-type zinc-finger motif lies at 409–440; the sequence is RAGDWKCPNPTCENMNFSWRNECNQCKAPKPD. Over residues 441–455 the composition is skewed to gly residues; the sequence is GPGGGPGGSHMGGNY. Positions 456–480 are enriched in basic and acidic residues; the sequence is GDDRRGGRGGYDRGGYRGRGGDRGG. Arginine 460, arginine 463, arginine 468, arginine 472, arginine 474, arginine 478, arginine 482, and arginine 485 each carry asymmetric dimethylarginine. Gly residues predominate over residues 481 to 495; that stretch reads FRGGRGGGDRGGFGP. Arginine 490 is subject to Asymmetric dimethylarginine; alternate. Position 490 is an omega-N-methylarginine; alternate (arginine 490). Basic and acidic residues predominate over residues 498 to 513; the sequence is MDSRGEHRQDRRERPY.

It belongs to the RRM TET family. In terms of assembly, self-oligomerizes (via N-terminal region). Oligomerization is essential for chromatin binding. Component of nuclear riboprotein complexes. Interacts with ILF3, TDRD3 and SF1. Interacts through its C-terminus with SFRS13A. Interacts with OTUB1 and SARNP. Interacts with LRSAM1. Interacts with SAFB1 in a DNA-dependent manner; this interaction tethers FUS to chromatin. Interacts with MATR3. Interacts with SNRNP70 and POLR2A; these interactions couple RNA transcription and splicing. Interacts (through its RNA-binding domain) with RALY (through its RNA-binding domain); both are components of the same RNPs. In terms of processing, phosphorylated in its N-terminal serine residues upon induced DNA damage. ATM and DNA-PK are able to phosphorylate FUS N-terminal region.

It is found in the nucleus. Its function is as follows. DNA/RNA-binding protein that plays a role in various cellular processes such as transcription regulation, RNA splicing, RNA transport, DNA repair and damage response. Binds to ssRNA containing the consensus sequence 5'-AGGUAA-3'. Binds to nascent pre-mRNAs and acts as a molecular mediator between RNA polymerase II and U1 small nuclear ribonucleoprotein thereby coupling transcription and splicing. Also binds its own pre-mRNA and autoregulates its expression; this autoregulation mechanism is mediated by non-sense-mediated decay. Plays a role in DNA repair mechanisms by promoting D-loop formation and homologous recombination during DNA double-strand break repair. In neuronal cells, plays crucial roles in dendritic spine formation and stability, RNA transport, mRNA stability and synaptic homeostasis. This is RNA-binding protein FUS (FUS) from Bos taurus (Bovine).